A 114-amino-acid polypeptide reads, in one-letter code: Putative membrane protein insertion efficiency factor (114 aa).

This sequence belongs to the UPF0161 family.

The protein localises to the cell inner membrane. Could be involved in insertion of integral membrane proteins into the membrane. The sequence is that of Putative membrane protein insertion efficiency factor from Nitrobacter hamburgensis (strain DSM 10229 / NCIMB 13809 / X14).